Here is a 122-residue protein sequence, read N- to C-terminus: Large ribosomal subunit protein uL14 (122 aa).

It belongs to the universal ribosomal protein uL14 family. As to quaternary structure, part of the 50S ribosomal subunit. Forms a cluster with proteins L3 and L19. In the 70S ribosome, L14 and L19 interact and together make contacts with the 16S rRNA in bridges B5 and B8.

Its function is as follows. Binds to 23S rRNA. Forms part of two intersubunit bridges in the 70S ribosome. In Bradyrhizobium diazoefficiens (strain JCM 10833 / BCRC 13528 / IAM 13628 / NBRC 14792 / USDA 110), this protein is Large ribosomal subunit protein uL14.